Consider the following 1213-residue polypeptide: Protein jagged-1b (1213 aa).

The first 26 residues, 1 to 26 (MILRRSSVFSAFYLHAFLLCLRTTVS), serve as a signal peptide directing secretion. Residues 27–1064 (DASGHFELEI…HQIPSPKTDY (1038 aa)) lie on the Extracellular side of the membrane. A glycan (N-linked (GlcNAc...) asparagine) is linked at Asn-139. Residues 182–226 (VTCLEHYYGFGCNKFCRPRDEFFGHYTCDQNGNKTCLEGWTGPDC) form the DSL domain. 2 disulfides stabilise this stretch: Cys-184–Cys-193 and Cys-197–Cys-209. A glycan (N-linked (GlcNAc...) asparagine) is linked at Asn-214. 39 cysteine pairs are disulfide-bonded: Cys-217-Cys-226, Cys-231-Cys-242, Cys-235-Cys-248, Cys-250-Cys-259, Cys-262-Cys-273, Cys-268-Cys-279, Cys-281-Cys-290, Cys-297-Cys-309, Cys-303-Cys-319, Cys-321-Cys-330, Cys-337-Cys-348, Cys-342-Cys-357, Cys-359-Cys-368, Cys-375-Cys-386, Cys-380-Cys-395, Cys-397-Cys-406, Cys-413-Cys-424, Cys-418-Cys-433, Cys-435-Cys-444, Cys-451-Cys-461, Cys-455-Cys-470, Cys-472-Cys-481, Cys-488-Cys-499, Cys-493-Cys-508, Cys-510-Cys-519, Cys-526-Cys-537, Cys-531-Cys-546, Cys-548-Cys-557, Cys-596-Cys-612, Cys-614-Cys-623, Cys-630-Cys-641, Cys-635-Cys-650, Cys-652-Cys-661, Cys-668-Cys-679, Cys-673-Cys-688, Cys-690-Cys-699, Cys-706-Cys-717, Cys-711-Cys-726, and Cys-728-Cys-737. Residues 227–260 (NTAICRQGCSTEHGSCKQPGGCKCLYGWQGPYCD) enclose the EGF-like 1 domain. In terms of domain architecture, EGF-like 2; atypical spans 261-291 (KCIPHPGCVHGTCVEPWQCLCDTNWGGQLCD). 2 EGF-like domains span residues 293–331 (DLNYCGTHQPCLNGGTCSNTGPDKYQCSCEDGYSGVNCE) and 333–369 (AEHACLSNPCANGGTCKETSQGYECHCAIGWSGTSCE). An EGF-like 5; calcium-binding domain is found at 371-407 (NVDDCTPNQCKHGGTCQDLVNGFKCACPPHWTGKTCQ). The region spanning 409-445 (DANECEDKPCVNAKSCHNLIGAYFCECLPGWSGQNCD) is the EGF-like 6; calcium-binding domain. Residues 447–482 (NINDCKGQCLNGGTCKDLVNGYRCLCPPGYTGEQCE) form the EGF-like 7; calcium-binding domain. Positions 484-520 (DVDECASSPCLNGGRCQDEVNGFQCLCPAGFSGQLCQ) constitute an EGF-like 8; calcium-binding domain. EGF-like domains follow at residues 522–558 (DIDYCKPNPCQNGAQCFNLASDYFCKCPDDYEGKNCS) and 592–624 (SSNVCGPHGRCRSQAGGQFTCECQEGFRGTYCH). A glycan (N-linked (GlcNAc...) asparagine) is linked at Asn-556. An EGF-like 11; calcium-binding domain is found at 626–662 (NINDCESNPCRNGGTCIDKVNVYQCICADGWEGVHCE). One can recognise an EGF-like 12; calcium-binding domain in the interval 664–700 (NIDDCSLNPCLNKGACQDLVNDFYCECRNGWKGKTCH). An EGF-like 13 domain is found at 702–738 (RDSQCDEATCNNGGTCHDEGDTFKCRCSPGWEGATCN). N-linked (GlcNAc...) asparagine glycosylation occurs at Asn-742. 9 cysteine pairs are disulfide-bonded: Cys-745-Cys-756, Cys-750-Cys-765, Cys-767-Cys-776, Cys-783-Cys-794, Cys-788-Cys-803, Cys-805-Cys-814, Cys-821-Cys-832, Cys-826-Cys-841, and Cys-843-Cys-852. Residues 746–777 (LPNPCENGGTCVVNGDSFNCVCKEGWEGSTCT) enclose the EGF-like 14 domain. Residues 779–815 (NTNDCNPHPCYNSGTCVDGENWYRCECAPGFAGPDCR) form the EGF-like 15; calcium-binding domain. The EGF-like 16; calcium-binding domain occupies 817-853 (NINECQSSPCAFGSTCVDEINGYRCLCPPGRIGPDCQ). The VWFC domain maps to 860–914 (CIANGQVTADGAKWEEDCNICQCQNGRIHCTMMWCGPKSCRIGKARGGCPASQSC). The EGF-like 17 domain maps to 918–956 (KEEQCFVKPCPSLGECWPSAPPPPSKCHASFSYQDDSCA). Residues Asn-957, Asn-988, and Asn-1042 are each glycosylated (N-linked (GlcNAc...) asparagine). Residues 1065-1087 (LVPLLSSIFIVLWIFALASAFLW) traverse the membrane as a helical segment. Residues 1088-1213 (CIHRRRKQNT…QSLNRMEYIV (126 aa)) lie on the Cytoplasmic side of the membrane. The interval 1181 to 1202 (EERAPNKNPNWTNKQDNRDLET) is disordered.

Its subcellular location is the membrane. It localises to the cell membrane. Its function is as follows. Ligand for Notch receptors and involved in the mediation of Notch signaling. Seems to be involved in cell-fate decisions. This Danio rerio (Zebrafish) protein is Protein jagged-1b (jag1b).